The chain runs to 275 residues: Large ribosomal subunit protein uL2 (275 aa).

Disordered stretches follow at residues 1–20 (MAVKKYRPYTPSRRQMTTAD) and 214–275 (WLGR…TRRK). A compositionally biased stretch (basic residues) spans 255–275 (KGLKTRRKRKTSDRFIVTRRK).

This sequence belongs to the universal ribosomal protein uL2 family. As to quaternary structure, part of the 50S ribosomal subunit. Forms a bridge to the 30S subunit in the 70S ribosome.

Its function is as follows. One of the primary rRNA binding proteins. Required for association of the 30S and 50S subunits to form the 70S ribosome, for tRNA binding and peptide bond formation. It has been suggested to have peptidyltransferase activity; this is somewhat controversial. Makes several contacts with the 16S rRNA in the 70S ribosome. This Deinococcus radiodurans (strain ATCC 13939 / DSM 20539 / JCM 16871 / CCUG 27074 / LMG 4051 / NBRC 15346 / NCIMB 9279 / VKM B-1422 / R1) protein is Large ribosomal subunit protein uL2 (rplB).